A 148-amino-acid chain; its full sequence is Urease accessory protein UreE (148 aa).

This sequence belongs to the UreE family.

The protein resides in the cytoplasm. Its function is as follows. Involved in urease metallocenter assembly. Binds nickel. Probably functions as a nickel donor during metallocenter assembly. The sequence is that of Urease accessory protein UreE from Geobacillus kaustophilus (strain HTA426).